The chain runs to 356 residues: MKIALLAGDGIGPEIMAQAERVLRYFQQEGLQIELEPGLLGGCAVDATGEPFPEATRQLAIEADAILLGAVGGTQYDGLPREKRPEQGLLAIRKELNLFANLRPVVLYPELSNASTLKPEVVAGLDILIVRELTGDIYFGRPRGIEYRDGQKVGFNTMIYSESEIRRIAHVAFQAAGRRNGRLCSVDKMNVLECTQLWRDVVTETAQSYPDVTLSHMLVDNAAMQLVRNPRQFDVVVTGNMFGDILSDEASMLTGSIGMLPSASLDDRNKGLYEPIHGSAPDIAGKGIANPLATILSAAMMLRYSFNQETAASRIEHAVQKTLQQSYRTEDIYEAGMKKVGTVEMGDRVLANLQSR.

73–86 lines the NAD(+) pocket; that stretch reads GTQYDGLPREKRPE. Substrate-binding residues include Arg-93, Arg-103, Arg-131, and Asp-220. Asp-220, Asp-244, and Asp-248 together coordinate Mg(2+). Residue 278-290 participates in NAD(+) binding; it reads GSAPDIAGKGIAN.

This sequence belongs to the isocitrate and isopropylmalate dehydrogenases family. LeuB type 1 subfamily. As to quaternary structure, homodimer. Mg(2+) is required as a cofactor. It depends on Mn(2+) as a cofactor.

The protein localises to the cytoplasm. The enzyme catalyses (2R,3S)-3-isopropylmalate + NAD(+) = 4-methyl-2-oxopentanoate + CO2 + NADH. It functions in the pathway amino-acid biosynthesis; L-leucine biosynthesis; L-leucine from 3-methyl-2-oxobutanoate: step 3/4. Catalyzes the oxidation of 3-carboxy-2-hydroxy-4-methylpentanoate (3-isopropylmalate) to 3-carboxy-4-methyl-2-oxopentanoate. The product decarboxylates to 4-methyl-2 oxopentanoate. This is 3-isopropylmalate dehydrogenase from Nitrosomonas europaea (strain ATCC 19718 / CIP 103999 / KCTC 2705 / NBRC 14298).